The primary structure comprises 314 residues: Formate-nitrite transporter (314 aa).

Topologically, residues 1–47 are cytoplasmic; the sequence is MSKGKSKYVIDPISVKTACTSEESYIRCVEYGKGKAHYPNLSLLAKA. A helical transmembrane segment spans residues 48 to 68; it reads ILAGVFVGVCAHASGIAGGHF. Residues 69–78 lie on the Extracellular side of the membrane; that stretch reads YYHKLREYVG. A helical membrane pass occupies residues 79–99; sequence ISMSAFVYGFTFPIAFLCIIA. Residues 100-128 lie on the Cytoplasmic side of the membrane; the sequence is TGSDLFTGNTLAVTTALLQRKVSLLQYLR. Residues 129-149 form a helical membrane-spanning segment; the sequence is VMSISLFGNYLGAVSFAFFVS. Residues 150–185 are Extracellular-facing; it reads HLSGAYEKHTDVTKNHIFQFLNDIAEKKISHTFIQC. A helical membrane pass occupies residues 186–206; sequence ICLAIGCNIFVCLAVYFVLTI. The Cytoplasmic portion of the chain corresponds to 207 to 211; it reads KDGSG. A helical membrane pass occupies residues 212 to 232; sequence MVFSVFFAVYAFAIAGYEHII. Residues 233-257 are Extracellular-facing; it reads ANMYTLNLALMVEAKVTWSKVYFHN. Residues 258–278 traverse the membrane as a helical segment; it reads LLPTLIGNYIAGALVLACPLF. Topologically, residues 279 to 314 are cytoplasmic; the sequence is YIYRNSYRDYERTRGDGSNCGLRSLSIEMQNGSNGN.

The protein belongs to the FNT transporter (TC 1.A.16) family. As to quaternary structure, homopentamer.

It localises to the cell membrane. The protein resides in the vacuole membrane. It carries out the reaction (S)-lactate(in) + H(+)(in) = (S)-lactate(out) + H(+)(out). The enzyme catalyses formate(in) + H(+)(in) = formate(out) + H(+)(out). It catalyses the reaction pyruvate(out) + H(+)(out) = pyruvate(in) + H(+)(in). The catalysed reaction is acetate(out) + H(+)(out) = acetate(in) + H(+)(in). Inhibited by the Malaria Box compound MMV007839 and its derivatives BH296 and BH267.meta. In terms of biological role, monocarboxylate-proton symporter that mediates the efflux of the waste product lactate in the intraerythrocytic parasites; active in acidic-to-neutral pH range. Transports L-lactate. The polypeptide is Formate-nitrite transporter (Plasmodium knowlesi (strain H)).